We begin with the raw amino-acid sequence, 2025 residues long: E3 ubiquitin-protein ligase TTC3 (2025 aa).

Residues Met1–Glu230 form an interaction with POLG region. 2 TPR repeats span residues Gly231–Asn264 and Leu266–Trp298. Position 378 is a phosphoserine; by PKB/AKT2 (Ser378). The tract at residues Asp423–Leu458 is disordered. 2 TPR repeats span residues Val536–Glu572 and Cys576–Leu609. The disordered stretch occupies residues Glu786–Glu805. Positions Arg793–Glu805 are enriched in basic and acidic residues. The residue at position 1009 (Ser1009) is a Phosphoserine. Disordered regions lie at residues Ala1012–Ala1068, Lys1215–Ser1295, Asp1773–Lys1842, and Ile1894–Glu1944. A compositionally biased stretch (basic residues) spans Val1019 to Lys1029. Residues Ser1038 to Ser1052 show a composition bias toward polar residues. Ser1061 is modified (phosphoserine). Residues Ile1894 to Tyr1912 show a composition bias toward basic and acidic residues. The span at Glu1913–Pro1928 shows a compositional bias: polar residues. The segment at Cys1957–Gln1997 adopts an RING-type zinc-finger fold. The disordered stretch occupies residues Glu2004–Arg2025. Polar residues predominate over residues Pro2013–Arg2025.

In terms of assembly, interacts (when phosphorylated on Ser-378) with AKT1, AKT2 and AKT3 (when phosphorylated). Interacts with CIT. Interacts with POLG. Interacts with HSP70. Interacts with SMURF2. Phosphorylation on Ser-378 by Akt is required for ubiquitin ligase activity. Post-translationally, proteolytically cleaved into differently sized N- and C-terminal fragments. Found in all tissues examined.

Its subcellular location is the nucleus. The protein localises to the cytoplasm. It is found in the golgi apparatus. The enzyme catalyses S-ubiquitinyl-[E2 ubiquitin-conjugating enzyme]-L-cysteine + [acceptor protein]-L-lysine = [E2 ubiquitin-conjugating enzyme]-L-cysteine + N(6)-ubiquitinyl-[acceptor protein]-L-lysine.. It functions in the pathway protein modification; protein ubiquitination. Functionally, E3 ubiquitin-protein ligase which catalyzes the formation of 'Lys-48'-polyubiquitin chains. Mediates the ubiquitination and subsequent degradation of phosphorylated Akt (AKT1, AKT2 and AKT3) in the nucleus. Acts as a terminal regulator of Akt signaling after activation; its phosphorylation by Akt, which is a prerequisite for ubiquitin ligase activity, suggests the existence of a regulation mechanism required to control Akt levels after activation. Positively regulates TGFB1-induced epithelial-mesenchymal transition and myofibroblast differentiation by mediating the ubiquitination and subsequent degradation of SMURF2. Regulates neuronal differentiation by regulating actin remodeling and Golgi organization via a signaling cascade involving RHOA, CIT and ROCK. Inhibits cell proliferation. In Homo sapiens (Human), this protein is E3 ubiquitin-protein ligase TTC3 (TTC3).